Here is a 256-residue protein sequence, read N- to C-terminus: Thiazole synthase (256 aa).

Lysine 95 (schiff-base intermediate with DXP) is an active-site residue. 1-deoxy-D-xylulose 5-phosphate-binding positions include glycine 156, 182-183 (AG), and 204-205 (NT).

Belongs to the ThiG family. As to quaternary structure, homotetramer. Forms heterodimers with either ThiH or ThiS.

It localises to the cytoplasm. The catalysed reaction is [ThiS sulfur-carrier protein]-C-terminal-Gly-aminoethanethioate + 2-iminoacetate + 1-deoxy-D-xylulose 5-phosphate = [ThiS sulfur-carrier protein]-C-terminal Gly-Gly + 2-[(2R,5Z)-2-carboxy-4-methylthiazol-5(2H)-ylidene]ethyl phosphate + 2 H2O + H(+). Its pathway is cofactor biosynthesis; thiamine diphosphate biosynthesis. In terms of biological role, catalyzes the rearrangement of 1-deoxy-D-xylulose 5-phosphate (DXP) to produce the thiazole phosphate moiety of thiamine. Sulfur is provided by the thiocarboxylate moiety of the carrier protein ThiS. In vitro, sulfur can be provided by H(2)S. This chain is Thiazole synthase, found in Salmonella paratyphi B (strain ATCC BAA-1250 / SPB7).